The primary structure comprises 164 residues: E3 ubiquitin ligase complex SCF subunit sconC (164 aa).

The interval 106–164 (ILAANYLDIKALLDVGCKTVANMIKGKSPEEIRKTFNIQNDFTPEEEDQIRRENEWAEE) is interaction with the F-box domain of F-box proteins.

Belongs to the SKP1 family. As to quaternary structure, component of the SCF (SKP1-CUL1-F-box protein) E3 ubiquitin ligase complexes.

The protein operates within protein modification; protein ubiquitination. Essential component of the SCF (SKP1-CUL1-F-box protein) E3 ubiquitin ligase complexes, which mediate the ubiquitination and subsequent proteasomal degradation of target proteins. Controls sulfur metabolite repression, probably by mediating the inactivation or degradation of the metR transcription factor. This chain is E3 ubiquitin ligase complex SCF subunit sconC (sconC), found in Arthroderma benhamiae (strain ATCC MYA-4681 / CBS 112371) (Trichophyton mentagrophytes).